A 438-amino-acid polypeptide reads, in one-letter code: sn-glycerol-3-phosphate-binding periplasmic protein UgpB (438 aa).

The signal sequence occupies residues methionine 1 to alanine 23. Positions 65, 89, 144, 270, 307, 346, and 397 each coordinate sn-glycerol 3-phosphate.

This sequence belongs to the bacterial solute-binding protein 1 family. The complex is composed of two ATP-binding proteins (UgpC), two transmembrane proteins (UgpA and UgpE) and a solute-binding protein (UgpB).

It localises to the periplasm. Functionally, part of the ABC transporter complex UgpBAEC involved in sn-glycerol-3-phosphate (G3P) import. Binds G3P. The protein is sn-glycerol-3-phosphate-binding periplasmic protein UgpB (ugpB) of Escherichia coli O6:K15:H31 (strain 536 / UPEC).